The following is a 641-amino-acid chain: Chaperone protein HtpG (641 aa).

Residues 1–351 form an a; substrate-binding region; that stretch reads MTQSVHAETH…SNDLPLNVSR (351 aa). Positions 352–568 are b; sequence EILQDNKVTV…AHGMSTQMIK (217 aa). The tract at residues 569–641 is c; it reads LMRAAGQPVP…SRINRLLLQA (73 aa).

This sequence belongs to the heat shock protein 90 family. Homodimer.

The protein resides in the cytoplasm. Its function is as follows. Molecular chaperone. Has ATPase activity. In Aeromonas hydrophila subsp. hydrophila (strain ATCC 7966 / DSM 30187 / BCRC 13018 / CCUG 14551 / JCM 1027 / KCTC 2358 / NCIMB 9240 / NCTC 8049), this protein is Chaperone protein HtpG.